Reading from the N-terminus, the 417-residue chain is Probable serine/threonine-protein kinase WNK9 (417 aa).

Positions 1 to 23 are disordered; that stretch reads MDLVEAEAEEQPPDEDGDEEGYV. In terms of domain architecture, Protein kinase spans 32 to 289; the sequence is IRYDEIVGSG…ATELLKSSFL (258 aa). ATP contacts are provided by residues 113 to 116 and Lys-163; that span reads TELF. The active-site Proton acceptor is Asp-180.

Belongs to the protein kinase superfamily. Ser/Thr protein kinase family. WNK subfamily.

It carries out the reaction L-seryl-[protein] + ATP = O-phospho-L-seryl-[protein] + ADP + H(+). The catalysed reaction is L-threonyl-[protein] + ATP = O-phospho-L-threonyl-[protein] + ADP + H(+). This Oryza sativa subsp. japonica (Rice) protein is Probable serine/threonine-protein kinase WNK9 (WNK9).